The primary structure comprises 290 residues: UPF0507 protein YML003W (290 aa).

The protein belongs to the UPF0507 family.

The protein is UPF0507 protein YML003W of Saccharomyces cerevisiae (strain ATCC 204508 / S288c) (Baker's yeast).